A 168-amino-acid chain; its full sequence is Photosystem I assembly protein Ycf3 (168 aa).

TPR repeat units lie at residues 35–68, 72–105, and 120–153; these read AFTY…EIDP, SYIL…NPFL, and GEQA…TPGN.

Belongs to the Ycf3 family.

It is found in the plastid. It localises to the chloroplast thylakoid membrane. Its function is as follows. Essential for the assembly of the photosystem I (PSI) complex. May act as a chaperone-like factor to guide the assembly of the PSI subunits. This chain is Photosystem I assembly protein Ycf3, found in Solanum tuberosum (Potato).